Consider the following 250-residue polypeptide: Leucyl/phenylalanyl-tRNA--protein transferase (250 aa).

This sequence belongs to the L/F-transferase family.

The protein localises to the cytoplasm. It catalyses the reaction N-terminal L-lysyl-[protein] + L-leucyl-tRNA(Leu) = N-terminal L-leucyl-L-lysyl-[protein] + tRNA(Leu) + H(+). The catalysed reaction is N-terminal L-arginyl-[protein] + L-leucyl-tRNA(Leu) = N-terminal L-leucyl-L-arginyl-[protein] + tRNA(Leu) + H(+). It carries out the reaction L-phenylalanyl-tRNA(Phe) + an N-terminal L-alpha-aminoacyl-[protein] = an N-terminal L-phenylalanyl-L-alpha-aminoacyl-[protein] + tRNA(Phe). Functionally, functions in the N-end rule pathway of protein degradation where it conjugates Leu, Phe and, less efficiently, Met from aminoacyl-tRNAs to the N-termini of proteins containing an N-terminal arginine or lysine. In Cupriavidus necator (strain ATCC 17699 / DSM 428 / KCTC 22496 / NCIMB 10442 / H16 / Stanier 337) (Ralstonia eutropha), this protein is Leucyl/phenylalanyl-tRNA--protein transferase.